We begin with the raw amino-acid sequence, 272 residues long: Phosphoglycolate phosphatase (272 aa).

Asp19 (nucleophile) is an active-site residue. Mg(2+) contacts are provided by Asp19, Asp21, and Asp182.

This sequence belongs to the HAD-like hydrolase superfamily. CbbY/CbbZ/Gph/YieH family. Mg(2+) is required as a cofactor.

The catalysed reaction is 2-phosphoglycolate + H2O = glycolate + phosphate. The protein operates within organic acid metabolism; glycolate biosynthesis; glycolate from 2-phosphoglycolate: step 1/1. Specifically catalyzes the dephosphorylation of 2-phosphoglycolate. Is involved in the dissimilation of the intracellular 2-phosphoglycolate formed during the DNA repair of 3'-phosphoglycolate ends, a major class of DNA lesions induced by oxidative stress. This is Phosphoglycolate phosphatase from Pseudomonas fluorescens (strain Pf0-1).